A 918-amino-acid polypeptide reads, in one-letter code: Aconitase-ribosomal protein bL21m fusion protein (918 aa).

The N-terminal 30 residues, 1 to 30, are a transit peptide targeting the mitochondrion; the sequence is MATFARMKLCLSGSSQAIPSKGISLVAARF. Residues 31 to 811 form a homocitrate dehydratase, mitochondrial region; the sequence is QSTASRASYV…IDSIKQQPDH (781 aa). Residues glutamine 105 and 198–200 each bind substrate; that span reads DSH. Residues cysteine 394, cysteine 457, and cysteine 460 each coordinate [4Fe-4S] cluster. Substrate-binding positions include arginine 484, arginine 489, lysine 619, and 680 to 681; that span reads AR. Residues 812-918 form a large ribosomal subunit protein bL21m region; it reads YADAYIFNRH…ILRVTELKLN (107 aa).

In the N-terminal section; belongs to the aconitase/IPM isomerase family. This sequence in the C-terminal section; belongs to the bacterial ribosomal protein bL21 family. In terms of assembly, component of the mitochondrial large ribosomal subunit (mt-LSU). Mature yeast 74S mitochondrial ribosomes consist of a small (37S) and a large (54S) subunit. The 37S small subunit contains a 15S ribosomal RNA (15S mt-rRNA) and at least 32 different proteins. The 54S large subunit contains a 21S rRNA (21S mt-rRNA) and at least 45 different proteins. [4Fe-4S] cluster is required as a cofactor.

It localises to the mitochondrion. The protein resides in the nucleus. The enzyme catalyses (2R)-homocitrate = cis-homoaconitate + H2O. It functions in the pathway amino-acid biosynthesis; L-lysine biosynthesis via AAA pathway; L-alpha-aminoadipate from 2-oxoglutarate: step 2/5. Its function is as follows. Catalyzes the reversible dehydration of (R)-homocitrate to cis-homoaconitate, a step in the alpha-aminoadipate pathway for lysine biosynthesis. Functionally, component of the mitochondrial ribosome (mitoribosome), a dedicated translation machinery responsible for the synthesis of mitochondrial genome-encoded proteins, including at least some of the essential transmembrane subunits of the mitochondrial respiratory chain. The mitoribosomes are attached to the mitochondrial inner membrane and translation products are cotranslationally integrated into the membrane. The protein is Aconitase-ribosomal protein bL21m fusion protein (aco2) of Schizosaccharomyces pombe (strain 972 / ATCC 24843) (Fission yeast).